A 397-amino-acid polypeptide reads, in one-letter code: 2-acyl-1-lysophosphatidylinositol acyltransferase (397 aa).

An HXXXXD motif motif is present at residues 112 to 117 (HQIYTD).

It belongs to the 1-acyl-sn-glycerol-3-phosphate acyltransferase family.

Its subcellular location is the lipid droplet. It catalyses the reaction 1-heptadecanoyl-sn-glycero-3-phosphate + octadecanoyl-CoA = 1-heptadecanoyl-2-octadecanoyl-sn-glycero-3-phosphate + CoA. The catalysed reaction is 1-heptadecanoyl-sn-glycero-3-phosphate + tetradecanoyl-CoA = 1-heptadecanoyl-2-tetradecanoyl-sn-glycero-3-phosphate + CoA. The enzyme catalyses 1-heptadecanoyl-sn-glycero-3-phosphate + hexadecanoyl-CoA = 1-heptadecanoyl-2-hexadecanoyl-sn-glycero-3-phosphate + CoA. Its function is as follows. Acyltransferase with lysophosphatidic acid acyltransferase (LPAAT) activity. Fatty acyl substrates include 18:0-acyl-CoA, 16:0-acyl-CoA, 17:0-acyl-CoA and 14:0-acyl-CoA. Responsible for the acyl-CoA-dependent introduction of saturated very long chain fatty acids (VLCFAs) into phosphatidylinositol, transferring saturated FAs with 18 to 26 carbon atoms. Responsible for the incorporation of stearate into phosphatidylinositol. Overexpression has an effect on chromosome stability. Regulates phosphorylation and expression of glycerol-3-phosphate acyltransferase SCT1. The protein is 2-acyl-1-lysophosphatidylinositol acyltransferase of Saccharomyces cerevisiae (strain ATCC 204508 / S288c) (Baker's yeast).